Reading from the N-terminus, the 200-residue chain is Peptidyl-tRNA hydrolase (200 aa).

Y17 is a binding site for tRNA. The active-site Proton acceptor is the H22. Residues Y78, N80, and N126 each contribute to the tRNA site.

The protein belongs to the PTH family. As to quaternary structure, monomer.

Its subcellular location is the cytoplasm. It carries out the reaction an N-acyl-L-alpha-aminoacyl-tRNA + H2O = an N-acyl-L-amino acid + a tRNA + H(+). In terms of biological role, hydrolyzes ribosome-free peptidyl-tRNAs (with 1 or more amino acids incorporated), which drop off the ribosome during protein synthesis, or as a result of ribosome stalling. Its function is as follows. Catalyzes the release of premature peptidyl moieties from peptidyl-tRNA molecules trapped in stalled 50S ribosomal subunits, and thus maintains levels of free tRNAs and 50S ribosomes. This is Peptidyl-tRNA hydrolase from Cutibacterium acnes (strain DSM 16379 / KPA171202) (Propionibacterium acnes).